Consider the following 608-residue polypeptide: Albumin (608 aa).

The signal sequence occupies residues 1 to 18 (MKWVTFLLLLFVSGSAFS). The propeptide occupies 19–24 (RGVFRR). Albumin domains follow at residues 19–211 (RGVF…GVKE), 212–403 (KALV…EFQP), and 404–601 (LVEE…NLVT). His27 contacts Cu cation. A Phosphoserine modification is found at Ser29. Ca(2+)-binding residues include Glu30 and Asp37. Cys77 and Cys86 form a disulfide bridge. Residues Ser82 and Ser89 each carry the phosphoserine modification. Residue His91 participates in Zn(2+) binding. Intrachain disulfides connect Cys99–Cys115, Cys114–Cys125, Cys148–Cys193, Cys192–Cys201, Cys224–Cys270, and Cys269–Cys277. Residue Lys229 is modified to N6-succinyllysine. Ca(2+) is bound at residue Glu268. His271 and Asp273 together coordinate Zn(2+). Residues Asp273, Glu276, and Asp279 each contribute to the Ca(2+) site. 8 disulfides stabilise this stretch: Cys289–Cys303, Cys302–Cys313, Cys340–Cys385, Cys384–Cys393, Cys416–Cys462, Cys461–Cys472, Cys485–Cys501, and Cys500–Cys511. Ser297 carries the post-translational modification Phosphoserine. At Ser443 the chain carries Phosphoserine. A phosphothreonine mark is found at Thr444 and Thr446. Lys460 carries the post-translational modification N6-succinyllysine. Position 513 is a phosphoserine (Ser513). 2 disulfide bridges follow: Cys538-Cys583 and Cys582-Cys591. Position 543 is an N6-succinyllysine (Lys543). Lys558 bears the N6-methyllysine mark. Residue Thr570 is modified to Phosphothreonine. Lys588 carries the N6-succinyllysine modification.

This sequence belongs to the ALB/AFP/VDB family. Part of a complex composed of complement component C3, CLCA1/CLCA3, A2ML1/OH and ALB/serum albumin. Interacts with FCGRT; this interaction regulates ALB homeostasis. Interacts with TASOR. In plasma, occurs in a covalently-linked complex with chromophore-bound alpha-1-microglobulin; this interaction does not prevent fatty acid binding to ALB. Phosphorylated by FAM20C in the extracellular medium. Plasma. Expressed in the granular cells within the cerebellum.

Its subcellular location is the secreted. Binds water, Ca(2+), Na(+), K(+), fatty acids, hormones, bilirubin and drugs. Its main function is the regulation of the colloidal osmotic pressure of blood. Major zinc transporter in plasma, typically binds about 80% of all plasma zinc. Major calcium and magnesium transporter in plasma, binds approximately 45% of circulating calcium and magnesium in plasma. Potentially has more than two calcium-binding sites and might additionally bind calcium in a non-specific manner. The shared binding site between zinc and calcium at residue Asp-273 suggests a crosstalk between zinc and calcium transport in the blood. The rank order of affinity is zinc &gt; calcium &gt; magnesium. Binds to the bacterial siderophore enterobactin and inhibits enterobactin-mediated iron uptake of E.coli from ferric transferrin, and may thereby limit the utilization of iron and growth of enteric bacteria such as E.coli. Does not prevent iron uptake by the bacterial siderophore aerobactin. The sequence is that of Albumin (Alb) from Mus musculus (Mouse).